The following is a 178-amino-acid chain: Small ribosomal subunit protein uS7c (178 aa).

Positions 137–146 are enriched in basic and acidic residues; sequence QKKEEIEKSK. Residues 137–178 form a disordered region; sequence QKKEEIEKSKSPVNNNKKFISKNKKSKNKKQKKRLKRKKNIY. Over residues 155–178 the composition is skewed to basic residues; it reads FISKNKKSKNKKQKKRLKRKKNIY.

The protein belongs to the universal ribosomal protein uS7 family. In terms of assembly, part of the 30S ribosomal subunit.

The protein localises to the plastid. Functionally, one of the primary rRNA binding proteins, it binds directly to 16S rRNA where it nucleates assembly of the head domain of the 30S subunit. In Euglena longa (Euglenophycean alga), this protein is Small ribosomal subunit protein uS7c (rps7).